Consider the following 590-residue polypeptide: Laccase-19 (590 aa).

The first 28 residues, 1-28, serve as a signal peptide directing secretion; that stretch reads MEKLSMVTSLLCAITVAVLAVAVVSGEA. Plastocyanin-like domains lie at 36–152 and 161–315; these read VVHE…PRDG and KDVP…YAGT. N-linked (GlcNAc...) asparagine glycans are attached at residues Asn-41 and Asn-47. The Cu cation site is built by His-86 and His-88. Asn-120 carries an N-linked (GlcNAc...) asparagine glycan. Residues His-131 and His-133 each contribute to the Cu cation site. Asn-205, Asn-344, Asn-378, Asn-397, Asn-434, and Asn-465 each carry an N-linked (GlcNAc...) asparagine glycan. The region spanning 424–566 is the Plastocyanin-like 3 domain; that stretch reads DFPIRPPRPF…ATAFIVEDGP (143 aa). The Cu cation site is built by Asn-483, His-486, His-488, His-545, Cys-546, His-547, His-551, and Met-556. The interval 565 to 590 is disordered; that stretch reads GPTPETSLPPPPPEFKRCGNNGLSQP.

This sequence belongs to the multicopper oxidase family. It depends on Cu cation as a cofactor.

The protein localises to the secreted. It is found in the extracellular space. The protein resides in the apoplast. It catalyses the reaction 4 hydroquinone + O2 = 4 benzosemiquinone + 2 H2O. Functionally, lignin degradation and detoxification of lignin-derived products. This is Laccase-19 (LAC19) from Oryza sativa subsp. japonica (Rice).